The following is a 37-amino-acid chain: U1-theraphotoxin-Hs1b (37 aa).

Disulfide bonds link Cys-4–Cys-18, Cys-8–Cys-29, and Cys-23–Cys-34.

In terms of assembly, form 1 and form 2 may dimerize. In terms of tissue distribution, expressed by the venom gland.

The protein resides in the secreted. Lethal neurotoxin that blocks neuromuscular transmission. Acts cooperatively to potentiate the activity of huwentoxin-I. The polypeptide is U1-theraphotoxin-Hs1b (Cyriopagopus schmidti (Chinese bird spider)).